We begin with the raw amino-acid sequence, 439 residues long: Cysteine desulfurase-like protein ustD (439 aa).

A disordered region spans residues Met1 to Gly25. Residues Thr120–Thr121, Asn206, and Ser255–Tyr257 each bind pyridoxal 5'-phosphate. The residue at position 258 (Lys258) is an N6-(pyridoxal phosphate)lysine.

This sequence belongs to the class-V pyridoxal-phosphate-dependent aminotransferase family. Pyridoxal 5'-phosphate is required as a cofactor.

It participates in mycotoxin biosynthesis. Its function is as follows. Cysteine desulfurase-like protein; part of the gene cluster that mediates the biosynthesis of the secondary metabolite ustiloxin B, an antimitotic tetrapeptide. First, ustA is processed by the subtilisin-like endoprotease Kex2 that is outside the ustiloxin B gene cluster, at the C-terminal side of Arg-Lys, after transfer to Golgi apparatus through the endoplasmic reticulum (ER). Cleavage by KEX2 generates 16 peptides YAIG-I to YAIG-XVI. To process the precursor peptide further, at least two peptidases are necessary to cleave the N-terminal and C-terminal sides of the Tyr-Ala-Ile-Gly core peptide which serves as backbone for the synthesis of ustiloxin B, through cyclization and modification of the tyrosine with a non-protein coding amino acid, norvaline. One of the two peptidases must be the serine peptidase ustP; and the other pepdidase is probably ustH. Macrocyclization of the core peptide derived from ustA requires the tyrosinase ustQ, as well as the homologous oxidases ustYa and ustYb, and leads to the production of the first cyclization product N-desmethylustiloxin F. For the formation of N-desmethylustiloxin F, three oxidation steps are required, hydroxylation at the benzylic position, hydroxylation at either the aromatic ring of Tyr or beta-position of Ile, and oxidative cyclization. UstQ may catalyze the oxidation of a phenol moiety, whereas the ustYa and ustYb are most likely responsible for the remaining two-step oxidations. N-desmethylustiloxin F is then methylated by ustM to yield ustiloxin F which in turn substrate of the cytochrome P450 monooxygenase ustC which catalyzes the formation of S-deoxyustiloxin H. The flavoprotein monooxygenases ustF1 and ustF2 then participate in the modification of the side chain of S-deoxyustiloxin H, leading to the synthesis of an oxime intermediate, via ustiloxin H. Finally, carboxylative dehydration performed by the cysteine desulfurase-like protein ustD yields ustiloxin B. The chain is Cysteine desulfurase-like protein ustD from Aspergillus flavus (strain ATCC 200026 / FGSC A1120 / IAM 13836 / NRRL 3357 / JCM 12722 / SRRC 167).